Reading from the N-terminus, the 153-residue chain is Pheromone-binding protein Gp-9 (153 aa).

The first 19 residues, 1-19, serve as a signal peptide directing secretion; the sequence is MKTFVLHIFIFALVAFASA. Disulfide bonds link C37–C77, C73–C129, and C118–C138.

This sequence belongs to the PBP/GOBP family. In terms of assembly, homodimer.

The protein resides in the secreted. Its function is as follows. Colony queen number, a major feature of social organization, is associated with worker genotype for Gp-9. Colonies are headed by either a single reproductive queen (monogyne form) or multiple queens (polygyne form). Differences in worker Gp-9 genotypes between social forms may cause differences in workers' abilities to recognize queens and regulate their numbers. The protein is Pheromone-binding protein Gp-9 of Solenopsis electra (Fire ant).